A 687-amino-acid chain; its full sequence is Glycine--tRNA ligase beta subunit (687 aa).

This sequence belongs to the class-II aminoacyl-tRNA synthetase family. Tetramer of two alpha and two beta subunits.

The protein resides in the cytoplasm. It catalyses the reaction tRNA(Gly) + glycine + ATP = glycyl-tRNA(Gly) + AMP + diphosphate. This chain is Glycine--tRNA ligase beta subunit, found in Geotalea daltonii (strain DSM 22248 / JCM 15807 / FRC-32) (Geobacter daltonii).